The primary structure comprises 224 residues: Protein DEHYDRATION-INDUCED 19 homolog 4 (224 aa).

Residues 1-12 (MDSNWINCPSVF) show a composition bias toward polar residues. Positions 1–23 (MDSNWINCPSVFSSSSSSSRRCQ) are disordered. A compositionally biased stretch (low complexity) spans 13 to 23 (SSSSSSSRRCQ). Thr117 carries the post-translational modification Phosphothreonine.

Belongs to the Di19 family. Post-translationally, phosphorylated in vitro by CPK3 or CPK11. Expressed in seedlings, roots, leaves, stems, flowers and siliques.

The protein resides in the cytoplasm. It is found in the perinuclear region. The protein is Protein DEHYDRATION-INDUCED 19 homolog 4 (DI19-4) of Arabidopsis thaliana (Mouse-ear cress).